A 235-amino-acid chain; its full sequence is Proteasome subunit alpha (235 aa).

It belongs to the peptidase T1A family. In terms of assembly, the 20S proteasome core is composed of 14 alpha and 14 beta subunits that assemble into four stacked heptameric rings, resulting in a barrel-shaped structure. The two inner rings, each composed of seven catalytic beta subunits, are sandwiched by two outer rings, each composed of seven alpha subunits. The catalytic chamber with the active sites is on the inside of the barrel. Has a gated structure, the ends of the cylinder being occluded by the N-termini of the alpha-subunits. Is capped by the proteasome-associated ATPase, ARC.

Its subcellular location is the cytoplasm. The protein operates within protein degradation; proteasomal Pup-dependent pathway. Its activity is regulated as follows. The formation of the proteasomal ATPase ARC-20S proteasome complex, likely via the docking of the C-termini of ARC into the intersubunit pockets in the alpha-rings, may trigger opening of the gate for substrate entry. Interconversion between the open-gate and close-gate conformations leads to a dynamic regulation of the 20S proteasome proteolysis activity. Component of the proteasome core, a large protease complex with broad specificity involved in protein degradation. The polypeptide is Proteasome subunit alpha (Paenarthrobacter aurescens (strain TC1)).